The sequence spans 112 residues: Ribonuclease P protein component (112 aa).

Belongs to the RnpA family. Consists of a catalytic RNA component (M1 or rnpB) and a protein subunit.

The catalysed reaction is Endonucleolytic cleavage of RNA, removing 5'-extranucleotides from tRNA precursor.. Its function is as follows. RNaseP catalyzes the removal of the 5'-leader sequence from pre-tRNA to produce the mature 5'-terminus. It can also cleave other RNA substrates such as 4.5S RNA. The protein component plays an auxiliary but essential role in vivo by binding to the 5'-leader sequence and broadening the substrate specificity of the ribozyme. This Pelotomaculum thermopropionicum (strain DSM 13744 / JCM 10971 / SI) protein is Ribonuclease P protein component.